The following is a 432-amino-acid chain: Adenylosuccinate synthetase (432 aa).

GTP contacts are provided by residues 13-19 (GDEGKGK) and 41-43 (GHT). Asp14 acts as the Proton acceptor in catalysis. Mg(2+)-binding residues include Asp14 and Gly41. Residues 14–17 (DEGK), 39–42 (NAGH), Thr130, Arg144, Gln225, Thr240, and Arg304 each bind IMP. Catalysis depends on His42, which acts as the Proton donor. 300 to 306 (ATTGRSR) lines the substrate pocket. GTP contacts are provided by residues Arg306, 332–334 (KLD), and 415–417 (STG).

The protein belongs to the adenylosuccinate synthetase family. In terms of assembly, homodimer. Requires Mg(2+) as cofactor.

The protein localises to the cytoplasm. The catalysed reaction is IMP + L-aspartate + GTP = N(6)-(1,2-dicarboxyethyl)-AMP + GDP + phosphate + 2 H(+). Its pathway is purine metabolism; AMP biosynthesis via de novo pathway; AMP from IMP: step 1/2. Its function is as follows. Plays an important role in the de novo pathway of purine nucleotide biosynthesis. Catalyzes the first committed step in the biosynthesis of AMP from IMP. The sequence is that of Adenylosuccinate synthetase from Marinomonas sp. (strain MWYL1).